Here is a 108-residue protein sequence, read N- to C-terminus: uncharacterized protein (108 aa).

A helical membrane pass occupies residues 7 to 27; the sequence is FIPMLLVANAAPYFFYPIFML.

This sequence to N.crassa NCU05373.1.

The protein resides in the membrane. This is an uncharacterized protein from Schizosaccharomyces pombe (strain 972 / ATCC 24843) (Fission yeast).